A 175-amino-acid chain; its full sequence is NADH-quinone oxidoreductase subunit B (175 aa).

4 residues coordinate [4Fe-4S] cluster: Cys49, Cys50, Cys115, and Cys145.

Belongs to the complex I 20 kDa subunit family. As to quaternary structure, NDH-1 is composed of 14 different subunits. Subunits NuoB, C, D, E, F, and G constitute the peripheral sector of the complex. The cofactor is [4Fe-4S] cluster.

It is found in the cell membrane. It catalyses the reaction a quinone + NADH + 5 H(+)(in) = a quinol + NAD(+) + 4 H(+)(out). Its function is as follows. NDH-1 shuttles electrons from NADH, via FMN and iron-sulfur (Fe-S) centers, to quinones in the respiratory chain. The immediate electron acceptor for the enzyme in this species is believed to be a menaquinone. Couples the redox reaction to proton translocation (for every two electrons transferred, four hydrogen ions are translocated across the cytoplasmic membrane), and thus conserves the redox energy in a proton gradient. In Heliobacterium modesticaldum (strain ATCC 51547 / Ice1), this protein is NADH-quinone oxidoreductase subunit B.